The sequence spans 196 residues: Large ribosomal subunit protein uL11m (196 aa).

The protein belongs to the universal ribosomal protein uL11 family. In terms of assembly, component of the mitochondrial ribosome large subunit (39S) which comprises a 16S rRNA and about 50 distinct proteins.

The protein localises to the mitochondrion. The protein is Large ribosomal subunit protein uL11m (mRpL11) of Drosophila melanogaster (Fruit fly).